The following is a 273-amino-acid chain: Large ribosomal subunit protein uL2 (273 aa).

The tract at residues 221-263 is disordered; it reads RGTAMNPVDHPHGGGEGRNFGKHPVTPWGVQTKGKKTRHNKRT. The segment covering 253-263 has biased composition (basic residues); it reads KGKKTRHNKRT.

Belongs to the universal ribosomal protein uL2 family. Part of the 50S ribosomal subunit. Forms a bridge to the 30S subunit in the 70S ribosome.

In terms of biological role, one of the primary rRNA binding proteins. Required for association of the 30S and 50S subunits to form the 70S ribosome, for tRNA binding and peptide bond formation. It has been suggested to have peptidyltransferase activity; this is somewhat controversial. Makes several contacts with the 16S rRNA in the 70S ribosome. The polypeptide is Large ribosomal subunit protein uL2 (Histophilus somni (strain 129Pt) (Haemophilus somnus)).